Consider the following 71-residue polypeptide: UPF0352 protein Asuc_0778 (71 aa).

The protein belongs to the UPF0352 family.

This chain is UPF0352 protein Asuc_0778, found in Actinobacillus succinogenes (strain ATCC 55618 / DSM 22257 / CCUG 43843 / 130Z).